Reading from the N-terminus, the 123-residue chain is WAP four-disulfide core domain protein 5 (123 aa).

The signal sequence occupies residues 1-24; it reads MRIQSLLLLGALLAVGSQLPAVFG. WAP domains are found at residues 27 to 73 and 74 to 121; these read KGEK…CVPR and VSVK…RDPA. 8 disulfide bridges follow: C34–C62, C41–C66, C49–C61, C55–C70, C81–C109, C88–C113, C96–C108, and C102–C117.

The protein localises to the secreted. In terms of biological role, putative acid-stable proteinase inhibitor. This is WAP four-disulfide core domain protein 5 (WFDC5) from Chlorocebus aethiops (Green monkey).